The sequence spans 248 residues: Ras-like protein family member 11B (248 aa).

The small GTPase-like stretch occupies residues 29–246 (AGRRLVKIAV…ALSAKVRTVT (218 aa)). Residues 40–47 (GASGVGKT), 87–91 (DTPGI), and 152–155 (NKAD) contribute to the GTP site. Positions 205–229 (QQPSGTPEKRRTSLIPRPKSPNMQD) are disordered.

Belongs to the small GTPase superfamily. Ras family.

The enzyme catalyses GTP + H2O = GDP + phosphate + H(+). This chain is Ras-like protein family member 11B, found in Bos taurus (Bovine).